We begin with the raw amino-acid sequence, 319 residues long: Phosphatidylglycerol--prolipoprotein diacylglyceryl transferase (319 aa).

A run of 3 helical transmembrane segments spans residues 21 to 41 (PIPI…AIWL), 50 to 70 (GGNP…GIIG), and 98 to 118 (NGGL…AVFF). Arg-144 provides a ligand contact to a 1,2-diacyl-sn-glycero-3-phospho-(1'-sn-glycerol). 2 helical membrane passes run 191–211 (VHPT…LLMW) and 254–274 (INTI…FLLK). Positions 295-319 (AVASPDGKPLPKAGEGIDGETPSTR) are disordered.

The protein belongs to the Lgt family.

The protein localises to the cell membrane. It carries out the reaction L-cysteinyl-[prolipoprotein] + a 1,2-diacyl-sn-glycero-3-phospho-(1'-sn-glycerol) = an S-1,2-diacyl-sn-glyceryl-L-cysteinyl-[prolipoprotein] + sn-glycerol 1-phosphate + H(+). It functions in the pathway protein modification; lipoprotein biosynthesis (diacylglyceryl transfer). Functionally, catalyzes the transfer of the diacylglyceryl group from phosphatidylglycerol to the sulfhydryl group of the N-terminal cysteine of a prolipoprotein, the first step in the formation of mature lipoproteins. This chain is Phosphatidylglycerol--prolipoprotein diacylglyceryl transferase, found in Corynebacterium glutamicum (strain R).